The primary structure comprises 409 residues: DNA primase small subunit (409 aa).

Catalysis depends on residues glutamate 46, aspartate 111, and aspartate 113. Positions 123–133 (CCSGAQVCSKC) match the Zinc knuckle motif motif.

Belongs to the eukaryotic-type primase small subunit family. DNA polymerase alpha:primase is a four subunit enzyme complex, which is assembled throughout the cell cycle, and consists of the two DNA polymerase subunits A POL1 and B POL12, and the DNA primase large PRI2 and small PRI1 subunits.

Its function is as follows. DNA primase is the polymerase that synthesizes small RNA primers for the Okazaki fragments made during discontinuous DNA replication. In a complex with DNA polymerase alpha (DNA polymerase alpha:primase) constitutes a replicative polymerase. Both primase components participate in formation of the active center, but the ATP-binding site is exclusively located on p48. The chain is DNA primase small subunit (PRI1) from Saccharomyces cerevisiae (strain ATCC 204508 / S288c) (Baker's yeast).